A 396-amino-acid chain; its full sequence is Probable glucan endo-1,6-beta-glucosidase B (396 aa).

The first 17 residues, 1–17 (MIRRLAAFSALSGLATA), serve as a signal peptide directing secretion. N30 carries an N-linked (GlcNAc...) asparagine glycan. Residue E219 is the Proton donor of the active site. The N-linked (GlcNAc...) asparagine glycan is linked to N272. The active-site Nucleophile is E320.

It belongs to the glycosyl hydrolase 5 (cellulase A) family.

The protein localises to the secreted. The enzyme catalyses Random hydrolysis of (1-&gt;6)-linkages in (1-&gt;6)-beta-D-glucans.. Functionally, beta-glucanases participate in the metabolism of beta-glucan, the main structural component of the cell wall. Acts on lutean, pustulan and 1,6-oligo-beta-D-glucosides. This is Probable glucan endo-1,6-beta-glucosidase B (exgB) from Aspergillus fumigatus (strain ATCC MYA-4609 / CBS 101355 / FGSC A1100 / Af293) (Neosartorya fumigata).